Here is a 188-residue protein sequence, read N- to C-terminus: MAIRNLMELKASLPRNGRLMGLDLGEKTIGLAVSDPGLSVASPVGTIRRTKFTQDAQELARAMRDRDVRALVVGLPVNMDGTEGPRCQSVREFSRLLLQRPQLFGFEPEIAFWDERLSTSAVERMMIGWDMTRKRRDEVVDKMAAAYILQGALDRLRQGDAAPGGSDDERDEDGDTDGEDGGGDGGGE.

Residues 156-188 (LRQGDAAPGGSDDERDEDGDTDGEDGGGDGGGE) form a disordered region. Over residues 166 to 188 (SDDERDEDGDTDGEDGGGDGGGE) the composition is skewed to acidic residues.

This sequence belongs to the YqgF nuclease family.

It is found in the cytoplasm. Could be a nuclease involved in processing of the 5'-end of pre-16S rRNA. In Rhodospirillum centenum (strain ATCC 51521 / SW), this protein is Putative pre-16S rRNA nuclease.